A 194-amino-acid chain; its full sequence is Holliday junction branch migration complex subunit RuvA (194 aa).

The segment at 1–64 (MIGRLRGILA…EDSVALYGFL (64 aa)) is domain I. Residues 65–140 (REGERRLFRD…RAADFSSGAP (76 aa)) are domain II. Residues 140–144 (PITGQ) are flexible linker. Residues 145–194 (LGPDAVSEATVALQQLGYKPAEAARMARDAGAEGDEVATVIRKALQAALR) form a domain III region.

It belongs to the RuvA family. In terms of assembly, homotetramer. Forms an RuvA(8)-RuvB(12)-Holliday junction (HJ) complex. HJ DNA is sandwiched between 2 RuvA tetramers; dsDNA enters through RuvA and exits via RuvB. An RuvB hexamer assembles on each DNA strand where it exits the tetramer. Each RuvB hexamer is contacted by two RuvA subunits (via domain III) on 2 adjacent RuvB subunits; this complex drives branch migration. In the full resolvosome a probable DNA-RuvA(4)-RuvB(12)-RuvC(2) complex forms which resolves the HJ.

It is found in the cytoplasm. In terms of biological role, the RuvA-RuvB-RuvC complex processes Holliday junction (HJ) DNA during genetic recombination and DNA repair, while the RuvA-RuvB complex plays an important role in the rescue of blocked DNA replication forks via replication fork reversal (RFR). RuvA specifically binds to HJ cruciform DNA, conferring on it an open structure. The RuvB hexamer acts as an ATP-dependent pump, pulling dsDNA into and through the RuvAB complex. HJ branch migration allows RuvC to scan DNA until it finds its consensus sequence, where it cleaves and resolves the cruciform DNA. The protein is Holliday junction branch migration complex subunit RuvA of Xanthomonas euvesicatoria pv. vesicatoria (strain 85-10) (Xanthomonas campestris pv. vesicatoria).